The sequence spans 409 residues: MKTLELALPPSPPSLVPSFNYNSTARSVGNDVRTNFDVQLFLRKPKHQKSEPVVVIQQPQIQPQNPSSRCSTSDILRLMDSLSLPGNEDIYSCLAKESARENDQRGAHELQVHIMKSSIRPTITFINRLLLMHVSCGRLDITRQMFDRMPHRDFHSWAIVFLGCIEMGDYEDAAFLFVSMLKHSQKGAFKIPSWILGCVLKACAMIRDFELGKQVHALCHKLGFIDEEDSYLSGSLIRFYGEFRCLEDANLVLHQLSNANTVAWAAKVTNDYREGEFQEVIRDFIEMGNHGIKKNVSVFSNVLKACSWVSDGGRSGQQVHANAIKLGFESDCLIRCRLIEMYGKYGKVKDAEKVFKSSKDETSVSCWNAMVASYMQNGIYIEAIKLLYQMKATGIKAHDTLLNEAHLQM.

9 PPR repeats span residues 87-121, 122-152, 153-187, 192-226, 229-259, 260-294, 295-330, 331-361, and 363-397; these read NEDI…SIRP, TITF…MPHR, DFHS…SQKG, PSWI…GFID, DSYL…LSNA, NTVA…GIKK, NVSV…GFES, DCLI…SKDE, and SVSC…GIKA.

It belongs to the PPR family. PCMP-A subfamily.

The protein is Pentatricopeptide repeat-containing protein At1g31790 (PCMP-A1) of Arabidopsis thaliana (Mouse-ear cress).